A 147-amino-acid polypeptide reads, in one-letter code: Epididymal secretory protein E3-beta (147 aa).

An N-terminal signal peptide occupies residues 1–25 (MASSLKIWGTLLALLCILCTLLVQS).

Epididymis.

It is found in the secreted. In terms of biological role, possible function in sperm maturation. This Homo sapiens (Human) protein is Epididymal secretory protein E3-beta (EDDM3B).